A 364-amino-acid chain; its full sequence is Alanine racemase (364 aa).

The active-site Proton acceptor; specific for D-alanine is the Lys34. An N6-(pyridoxal phosphate)lysine modification is found at Lys34. Residue Arg129 participates in substrate binding. Tyr259 serves as the catalytic Proton acceptor; specific for L-alanine. Met307 provides a ligand contact to substrate.

It belongs to the alanine racemase family. Pyridoxal 5'-phosphate serves as cofactor.

It carries out the reaction L-alanine = D-alanine. Its pathway is amino-acid biosynthesis; D-alanine biosynthesis; D-alanine from L-alanine: step 1/1. Its function is as follows. Catalyzes the interconversion of L-alanine and D-alanine. May also act on other amino acids. This is Alanine racemase (alr) from Coxiella burnetii (strain Dugway 5J108-111).